The following is a 403-amino-acid chain: Tryptophan synthase beta chain (403 aa).

Lys87 carries the post-translational modification N6-(pyridoxal phosphate)lysine.

Belongs to the TrpB family. In terms of assembly, tetramer of two alpha and two beta chains. Pyridoxal 5'-phosphate is required as a cofactor.

The catalysed reaction is (1S,2R)-1-C-(indol-3-yl)glycerol 3-phosphate + L-serine = D-glyceraldehyde 3-phosphate + L-tryptophan + H2O. It functions in the pathway amino-acid biosynthesis; L-tryptophan biosynthesis; L-tryptophan from chorismate: step 5/5. Functionally, the beta subunit is responsible for the synthesis of L-tryptophan from indole and L-serine. The protein is Tryptophan synthase beta chain of Shewanella loihica (strain ATCC BAA-1088 / PV-4).